The chain runs to 600 residues: MKKQLRSSFSTQGRRMAGARALWAANGMKKEQLGKPIIAIVNSFTQFVPGHVHLHEIGQLVKKEIEKLGCFAAEFNTIAIDDGIAMGHDGMLYSLPSRDIIADSVEYMVNAHKADAMVCISNCDKITPGMLMAAMRLNIPTVFVSGGPMEAGELDGQHLDLIDAMIKSADESVSDEEVSKIENRACPTCGCCSGMFTANSMNCLNEAIGLALPGNGTIVATHANRTQLFKDAAKQIVENTYKYYRDGDESVLPRSIATREAFLNAMTLDIAMGGSTNTVLHLLAIAHEAEADFKMDDIDMLSRKSPCLCKVAPNTQKYHIQDVNRAGGIMGIMGQLAKAGLIDTSVVRIDGMTLGEAIDKYDITSPNVCEEAIKKYKSAAAGKFNLVLGSQDVYYKELDTDRAEGCIRDIEHAYSKDGGLAVLKGNIAQDGCVVKTAGVDESIWKFTGPAKVFDSQEAACNGILGGKVVSGDVVVITHEGPKGGPGMQEMLYPTSYIKSRHLGKECALITDGRFSGGTSGLSIGHISPEAAAGGNIGKIKDGDIIEINIPERTINVRLTDEELAARPMTPVTRERYVTKSLKAYASMVSSADKGAVRLID.

Residue Asp82 participates in Mg(2+) binding. A [2Fe-2S] cluster-binding site is contributed by Cys123. Mg(2+)-binding residues include Asp124 and Lys125. Lys125 is modified (N6-carboxylysine). Cys192 lines the [2Fe-2S] cluster pocket. Glu489 provides a ligand contact to Mg(2+). The Proton acceptor role is filled by Ser515.

It belongs to the IlvD/Edd family. In terms of assembly, homodimer. [2Fe-2S] cluster is required as a cofactor. It depends on Mg(2+) as a cofactor.

The enzyme catalyses (2R)-2,3-dihydroxy-3-methylbutanoate = 3-methyl-2-oxobutanoate + H2O. The catalysed reaction is (2R,3R)-2,3-dihydroxy-3-methylpentanoate = (S)-3-methyl-2-oxopentanoate + H2O. It participates in amino-acid biosynthesis; L-isoleucine biosynthesis; L-isoleucine from 2-oxobutanoate: step 3/4. The protein operates within amino-acid biosynthesis; L-valine biosynthesis; L-valine from pyruvate: step 3/4. In terms of biological role, functions in the biosynthesis of branched-chain amino acids. Catalyzes the dehydration of (2R,3R)-2,3-dihydroxy-3-methylpentanoate (2,3-dihydroxy-3-methylvalerate) into 2-oxo-3-methylpentanoate (2-oxo-3-methylvalerate) and of (2R)-2,3-dihydroxy-3-methylbutanoate (2,3-dihydroxyisovalerate) into 2-oxo-3-methylbutanoate (2-oxoisovalerate), the penultimate precursor to L-isoleucine and L-valine, respectively. The sequence is that of Dihydroxy-acid dehydratase from Bacteroides fragilis (strain YCH46).